Here is a 784-residue protein sequence, read N- to C-terminus: Probable phosphoketolase (784 aa).

The protein belongs to the XFP family. Thiamine diphosphate serves as cofactor.

The sequence is that of Probable phosphoketolase from Rhodopseudomonas palustris (strain BisB5).